The sequence spans 550 residues: Glucose-6-phosphate isomerase (550 aa).

Residue E356 is the Proton donor of the active site. Catalysis depends on residues H387 and K515.

Belongs to the GPI family.

It is found in the cytoplasm. It catalyses the reaction alpha-D-glucose 6-phosphate = beta-D-fructose 6-phosphate. The protein operates within carbohydrate biosynthesis; gluconeogenesis. It participates in carbohydrate degradation; glycolysis; D-glyceraldehyde 3-phosphate and glycerone phosphate from D-glucose: step 2/4. In terms of biological role, catalyzes the reversible isomerization of glucose-6-phosphate to fructose-6-phosphate. In Vibrio vulnificus (strain YJ016), this protein is Glucose-6-phosphate isomerase.